The primary structure comprises 335 residues: Spliceosome-associated protein 49 (335 aa).

2 consecutive RRM domains span residues 13 to 84 (IYLG…PIRV) and 101 to 172 (LFVG…PITV). The interval 204 to 223 (VTPQSTLPPGFSPATPAPTS) is disordered.

The protein belongs to the SF3B4 family.

The protein localises to the nucleus. This is Spliceosome-associated protein 49 (sap49) from Schizosaccharomyces pombe (strain 972 / ATCC 24843) (Fission yeast).